A 354-amino-acid chain; its full sequence is Ribosomal RNA large subunit methyltransferase K (354 aa).

This sequence belongs to the methyltransferase superfamily.

It localises to the cytoplasm. The catalysed reaction is guanosine(2069) in 23S rRNA + S-adenosyl-L-methionine = N(2)-methylguanosine(2069) in 23S rRNA + S-adenosyl-L-homocysteine + H(+). Its function is as follows. Specifically methylates the guanine in position 2069 (m7G2069) of 23S rRNA. This Neisseria meningitidis serogroup B (strain ATCC BAA-335 / MC58) protein is Ribosomal RNA large subunit methyltransferase K (rlmK).